The sequence spans 602 residues: Glutamyl-tRNA(Gln) amidotransferase subunit B, mitochondrial (602 aa).

A mitochondrion-targeting transit peptide spans 1 to 52; sequence MLQQWLRQSPAAAGLLRCSRYRGPQAALLQLSPQRAPTYHAIRSLQTSAAES. The disordered stretch occupies residues 61 to 83; sequence QLKQGAKGLKAQKRQRRESEEAS.

The protein belongs to the GatB/GatE family. GatB subfamily. In terms of assembly, subunit of the heterotrimeric GatCAB amidotransferase (AdT) complex, composed of A, B and C subunits.

Its subcellular location is the mitochondrion. It carries out the reaction L-glutamyl-tRNA(Gln) + L-glutamine + ATP + H2O = L-glutaminyl-tRNA(Gln) + L-glutamate + ADP + phosphate + H(+). Allows the formation of correctly charged Gln-tRNA(Gln) through the transamidation of misacylated Glu-tRNA(Gln) in the mitochondria. The reaction takes place in the presence of glutamine and ATP through an activated gamma-phospho-Glu-tRNA(Gln). The polypeptide is Glutamyl-tRNA(Gln) amidotransferase subunit B, mitochondrial (Aspergillus clavatus (strain ATCC 1007 / CBS 513.65 / DSM 816 / NCTC 3887 / NRRL 1 / QM 1276 / 107)).